We begin with the raw amino-acid sequence, 185 residues long: Endonuclease IV (185 aa).

The catalysed reaction is Endonucleolytic cleavage of the 5' phosphodiester bond of deoxycytidine in single-stranded DNA.. Functionally, cleaves single-stranded DNA in a dC-specific manner. The cleavage occurs exclusively at the 5'-proximal position (dC1) within a dCs tract having a minimal size of 6 bases. These specific cleavages may have a detrimental effect on the replication of host dC-containing DNA. The chain is Endonuclease IV (denB) from Enterobacteria phage T4 (Bacteriophage T4).